Consider the following 247-residue polypeptide: PF03932 family protein CutC (247 aa).

It belongs to the CutC family.

The protein localises to the cytoplasm. This Vibrio campbellii (strain ATCC BAA-1116) protein is PF03932 family protein CutC.